We begin with the raw amino-acid sequence, 115 residues long: MTDYSQFPRENILCVDMKSFYASVSAVAMGLNPLTCYLAVVGNTDRQGSVVLAASPALKKDFGIKTGSRLFEIPEDPRIYIVNPQMKLFIRVSTEITKLFYRFVPEKCVHTYSID.

Residues 12 to 115 (ILCVDMKSFY…EKCVHTYSID (104 aa)) enclose the UmuC domain. Residues D16 and D115 each coordinate Mg(2+).

The protein belongs to the DNA polymerase type-Y family. Mg(2+) serves as cofactor.

The protein is DNA repair protein homolog YozK (yozK) of Bacillus subtilis (strain 168).